The following is a 426-amino-acid chain: Histidinol dehydrogenase (426 aa).

Positions 125, 187, and 210 each coordinate NAD(+). The substrate site is built by serine 233, glutamine 255, and histidine 258. Residues glutamine 255 and histidine 258 each contribute to the Zn(2+) site. Active-site proton acceptor residues include glutamate 323 and histidine 324. Substrate is bound by residues histidine 324, aspartate 357, glutamate 411, and histidine 416. Aspartate 357 contacts Zn(2+). Zn(2+) is bound at residue histidine 416.

Belongs to the histidinol dehydrogenase family. The cofactor is Zn(2+).

The catalysed reaction is L-histidinol + 2 NAD(+) + H2O = L-histidine + 2 NADH + 3 H(+). Its pathway is amino-acid biosynthesis; L-histidine biosynthesis; L-histidine from 5-phospho-alpha-D-ribose 1-diphosphate: step 9/9. In terms of biological role, catalyzes the sequential NAD-dependent oxidations of L-histidinol to L-histidinaldehyde and then to L-histidine. The polypeptide is Histidinol dehydrogenase (hisD) (Methanothermobacter thermautotrophicus (strain ATCC 29096 / DSM 1053 / JCM 10044 / NBRC 100330 / Delta H) (Methanobacterium thermoautotrophicum)).